A 730-amino-acid polypeptide reads, in one-letter code: MYPSPVRHPAAGGPPPQGPIKFTIADTLERIKEEFNFLQAQYHSIKLECEKLSNEKTEMQRHYVMYYEMSYGLNVEMHKQTEIAKRLNTLINQLLPFLQADHQQQVLQAVERAKQVTMQELNLIIGHQQQHGIQQLLQQIHAQQVPGGPPQPMGALNPFGALGATMGLPHGPQGLLNKPPEHHRPDIKPTGLEGPAAAEERLRNSVSPADREKYRTRSPLDIENDSKRRKDEKLQEDEGEKSDQDLVVDVANEMESHSPRPNGEHVSMEVRDRESLNGERLEKPSSSGIKQERPPSRSGSSSSRSTPSLKTKDMEKPGTPGAKARTPTPNAAAPAPGVNPKQMMPQGPPPAGYPGAPYQRPADPYQRPPSDPAYGRPPPMPYDPHAHVRTNGIPHPSALTGGKPAYSFHMNGEGSLQPVPFPPDALVGVGIPRHARQINTLSHGEVVCAVTISNPTKYVYTGGKGCVKVWDISQPGNKNPVSQLDCLQRDNYIRSVKLLPDGRTLIVGGEASNLSIWDLASPTPRIKAELTSAAPACYALAISPDSKVCFSCCSDGNIAVWDLHNEILVRQFQGHTDGASCIDISPDGSRLWTGGLDNTVRSWDLREGRQLQQHDFSSQIFSLGYCPTGDWLAVGMENSHVEVLHASKPDKYQLHLHESCVLSLRFAACGKWFVSTGKDNLLNAWRTPYGASIFQSKETSSVLSCDISTDDKYIVTGSGDKKATVYEVIY.

The interval 144–411 (QVPGGPPQPM…GKPAYSFHMN (268 aa)) is disordered. Over residues 198 to 233 (AEERLRNSVSPADREKYRTRSPLDIENDSKRRKDEK) the composition is skewed to basic and acidic residues. 3 positions are modified to phosphoserine: Ser205, Ser207, and Ser218. The CCN domain stretch occupies residues 206 to 267 (VSPADREKYR…SPRPNGEHVS (62 aa)). The short motif at 227–230 (KRRK) is the Nuclear localization signal element. Ser242 carries the post-translational modification Phosphoserine; by CK2. Over residues 254-283 (MESHSPRPNGEHVSMEVRDRESLNGERLEK) the composition is skewed to basic and acidic residues. Ser258 carries the post-translational modification Phosphoserine; by CDC2. The binding to basic helix-loop-helix domain stretch occupies residues 262 to 425 (NGEHVSMEVR…LQPVPFPPDA (164 aa)). Ser267 bears the Phosphoserine mark. Low complexity-rich tracts occupy residues 296 to 308 (SRSG…STPS), 322 to 345 (AKAR…QMMP), and 353 to 362 (YPGAPYQRPA). Phosphothreonine occurs at positions 326 and 328. Over residues 366-382 (QRPPSDPAYGRPPPMPY) the composition is skewed to pro residues. WD repeat units follow at residues 442 to 480 (SHGE…NKNP), 488 to 527 (QRDN…PRIK), 532 to 571 (SAAP…LVRQ), 574 to 613 (GHTD…QLQQ), 615 to 654 (DFSS…KYQL), 656 to 695 (LHES…SIFQ), and 697 to 730 (KETS…EVIY).

It belongs to the WD repeat Groucho/TLE family. Forms a complex with the hairy/Enhancer of split/deadpan family of basic helix-loop-helix proteins in order to repress transcription. Its activity in regulating transcription depends on other proteins as it lacks a DNA-binding motif. Interacts with hairy/hry (via WRPW motif). In terms of processing, ubiquitinated by XIAP/BIRC4. Ubiquitinated by hyd in response to Wnt signaling, leading to degradation by the proteasome.

The protein localises to the nucleus. Its function is as follows. Transcriptional corepressor that regulates transcription when recruited to specific target DNA by hairy-related bHLH proteins. Maternally required for neurogenesis; in the segregation of the neuroectoderm. Directly or indirectly interacts with Notch and Delta. The sequence is that of Protein groucho (gro) from Drosophila melanogaster (Fruit fly).